We begin with the raw amino-acid sequence, 277 residues long: Caspase-3 (277 aa).

Met1 is modified (N-acetylmethionine). Propeptides lie at residues 1–9 (MENNKTSVD) and 10–28 (SKSI…KSMD). Position 11 is an N6-acetyllysine (Lys11). Residue Ser26 is modified to Phosphoserine. Active-site residues include His121 and Cys163. Cys163 carries the S-nitrosocysteine; in inhibited form modification.

The protein belongs to the peptidase C14A family. In terms of assembly, heterotetramer that consists of two anti-parallel arranged heterodimers, each one formed by a 17 kDa (p17) and a 12 kDa (p12) subunit. Interacts with BIRC6/bruce. (Microbial infection) Subunit p17 interacts with African swine fever virus (ASFV) inhibitor of apoptosis protein. Post-translationally, cleavage by granzyme B, caspase-6, caspase-8 and caspase-10 generates the two active subunits. Additional processing of the propeptides is likely due to the autocatalytic activity of the activated protease. Active heterodimers between the small subunit of caspase-7 protease and the large subunit of caspase-3 also occur and vice versa. In terms of processing, S-nitrosylated on its catalytic site cysteine in unstimulated cell lines and denitrosylated upon activation of the Fas apoptotic pathway, associated with an increase in intracellular caspase activity. Fas therefore activates caspase-3 not only by inducing the cleavage of the caspase zymogen to its active subunits, but also by stimulating the denitrosylation of its active site thiol. Ubiquitinated by BIRC6; this activity is inhibited by DIABLO/SMAC.

The protein resides in the cytoplasm. The catalysed reaction is Strict requirement for an Asp residue at positions P1 and P4. It has a preferred cleavage sequence of Asp-Xaa-Xaa-Asp-|- with a hydrophobic amino-acid residue at P2 and a hydrophilic amino-acid residue at P3, although Val or Ala are also accepted at this position.. Inhibited by BIRC6; following inhibition of BIRC6-caspase binding by DIABLO/SMAC, BIRC6 is subjected to caspase cleavage, leading to an increase in active caspases. Involved in the activation cascade of caspases responsible for apoptosis execution. At the onset of apoptosis, it proteolytically cleaves poly(ADP-ribose) polymerase PARP1 at a '216-Asp-|-Gly-217' bond. Cleaves and activates sterol regulatory element binding proteins (SREBPs) between the basic helix-loop-helix leucine zipper domain and the membrane attachment domain. Cleaves and activates caspase-6, -7 and -9 (CASP6, CASP7 and CASP9, respectively). Cleaves and inactivates interleukin-18 (IL18). Triggers cell adhesion in sympathetic neurons through RET cleavage. Cleaves IL-1 beta between an Asp and an Ala, releasing the mature cytokine which is involved in a variety of inflammatory processes. Cleaves and inhibits serine/threonine-protein kinase AKT1 in response to oxidative stress. Acts as an inhibitor of type I interferon production during virus-induced apoptosis by mediating cleavage of antiviral proteins CGAS, IRF3 and MAVS, thereby preventing cytokine overproduction. Also involved in pyroptosis by mediating cleavage and activation of gasdermin-E (GSDME). Cleaves XRCC4 and phospholipid scramblase proteins XKR4, XKR8 and XKR9, leading to promote phosphatidylserine exposure on apoptotic cell surface. Cleaves BIRC6 following inhibition of BIRC6-caspase binding by DIABLO/SMAC. This Sus scrofa (Pig) protein is Caspase-3 (CASP3).